Here is a 939-residue protein sequence, read N- to C-terminus: U3 small nucleolar RNA-associated protein 21 (939 aa).

Serine 2 bears the N-acetylserine mark. 14 WD repeats span residues 40-71, 81-111, 119-158, 168-201, 208-245, 252-287, 295-347, 354-388, 415-454, 463-497, 505-541, 546-581, 583-624, and 626-664; these read ATGT…LLFV, VALS…HLLE, EHLC…TKLT, VSLQ…LVFT, QITT…RTIK, SSLS…IHVL, YGGV…RSRG, SYIA…QSQE, VALA…GRWT, VKSV…LRKK, VTGI…GKLK, ITAM…VRQL, GHSN…DGII, and DNVA…KTVS. At serine 772 the chain carries Phosphoserine.

In terms of assembly, interacts with snoRNA U3. Interacts with MPP10. Interacts (via WD repeats) with UTP18. Component of the ribosomal small subunit (SSU) processome composed of at least 40 protein subunits and snoRNA U3.

The protein localises to the nucleus. The protein resides in the nucleolus. Functionally, involved in nucleolar processing of pre-18S ribosomal RNA and ribosome assembly. This Saccharomyces cerevisiae (strain ATCC 204508 / S288c) (Baker's yeast) protein is U3 small nucleolar RNA-associated protein 21 (UTP21).